A 148-amino-acid polypeptide reads, in one-letter code: Large ribosomal subunit protein uL15 (148 aa).

The tract at residues Met-1 to Val-61 is disordered.

It belongs to the universal ribosomal protein uL15 family. In terms of assembly, part of the 50S ribosomal subunit.

Functionally, binds to the 23S rRNA. In Thermodesulfovibrio yellowstonii (strain ATCC 51303 / DSM 11347 / YP87), this protein is Large ribosomal subunit protein uL15.